The chain runs to 535 residues: T-complex protein 1 subunit zeta 2 (535 aa).

The protein belongs to the TCP-1 chaperonin family. In terms of assembly, heterooligomeric complex of about 850 to 900 kDa that forms two stacked rings, 12 to 16 nm in diameter.

The protein localises to the cytoplasm. Its function is as follows. Molecular chaperone; assists the folding of proteins upon ATP hydrolysis. Known to play a role, in vitro, in the folding of actin and tubulin. This is T-complex protein 1 subunit zeta 2 from Arabidopsis thaliana (Mouse-ear cress).